The chain runs to 156 residues: uncharacterized protein (156 aa).

This is an uncharacterized protein from Methanocaldococcus jannaschii (strain ATCC 43067 / DSM 2661 / JAL-1 / JCM 10045 / NBRC 100440) (Methanococcus jannaschii).